The primary structure comprises 695 residues: Polyribonucleotide nucleotidyltransferase (695 aa).

Residues Asp488 and Asp494 each contribute to the Mg(2+) site. Residues 554–613 (PKTTIIKIKTDKIRDLIGRGGETIKGIISTSCASIDVDDSGNVNIFSNNQKSFDTAVQMV) form the KH domain. The 68-residue stretch at 623 to 690 (NKVYTGKVVK…DRGRIKLSRK (68 aa)) folds into the S1 motif domain.

It belongs to the polyribonucleotide nucleotidyltransferase family. Component of the RNA degradosome, which is a multiprotein complex involved in RNA processing and mRNA degradation. Mg(2+) is required as a cofactor.

The protein localises to the cytoplasm. It catalyses the reaction RNA(n+1) + phosphate = RNA(n) + a ribonucleoside 5'-diphosphate. Involved in mRNA degradation. Catalyzes the phosphorolysis of single-stranded polyribonucleotides processively in the 3'- to 5'-direction. The sequence is that of Polyribonucleotide nucleotidyltransferase from Vesicomyosocius okutanii subsp. Calyptogena okutanii (strain HA).